A 721-amino-acid polypeptide reads, in one-letter code: Polyribonucleotide nucleotidyltransferase (721 aa).

Residues D495 and D501 each coordinate Mg(2+). The KH domain maps to 562 to 621; the sequence is PRITTIKIRPERIKDIIGPGGKTIKDITARTGTSINIEDDGSVSIASPNQDKVEEAIKMI. The S1 motif domain occupies 631–699; that stretch reads GRIYLGTVRK…RSGKIRLSRK (69 aa). Positions 699-721 are disordered; sequence KEALADSAKKSEGTEPPKGEPAK.

Belongs to the polyribonucleotide nucleotidyltransferase family. It depends on Mg(2+) as a cofactor.

It is found in the cytoplasm. The enzyme catalyses RNA(n+1) + phosphate = RNA(n) + a ribonucleoside 5'-diphosphate. Functionally, involved in mRNA degradation. Catalyzes the phosphorolysis of single-stranded polyribonucleotides processively in the 3'- to 5'-direction. The chain is Polyribonucleotide nucleotidyltransferase from Anaeromyxobacter sp. (strain K).